The chain runs to 272 residues: 3-methyl-2-oxobutanoate hydroxymethyltransferase (272 aa).

Mg(2+) contacts are provided by Asp42 and Asp86. Residues 42–43 (DS), Asp86, and Lys116 contribute to the 3-methyl-2-oxobutanoate site. Glu118 contributes to the Mg(2+) binding site. The active-site Proton acceptor is Glu185.

The protein belongs to the PanB family. Homodecamer; pentamer of dimers. Requires Mg(2+) as cofactor.

It is found in the cytoplasm. It catalyses the reaction 3-methyl-2-oxobutanoate + (6R)-5,10-methylene-5,6,7,8-tetrahydrofolate + H2O = 2-dehydropantoate + (6S)-5,6,7,8-tetrahydrofolate. The protein operates within cofactor biosynthesis; (R)-pantothenate biosynthesis; (R)-pantoate from 3-methyl-2-oxobutanoate: step 1/2. Functionally, catalyzes the reversible reaction in which hydroxymethyl group from 5,10-methylenetetrahydrofolate is transferred onto alpha-ketoisovalerate to form ketopantoate. This chain is 3-methyl-2-oxobutanoate hydroxymethyltransferase, found in Prochlorococcus marinus (strain MIT 9313).